We begin with the raw amino-acid sequence, 514 residues long: 2,3-bisphosphoglycerate-independent phosphoglycerate mutase (514 aa).

Mn(2+)-binding residues include Asp13 and Ser69. Catalysis depends on Ser69, which acts as the Phosphoserine intermediate. Residues His128, 158–159 (RD), Arg189, Arg195, 263–266 (RADR), and Lys336 contribute to the substrate site. Mn(2+) is bound by residues Asp402, His406, Asp443, His444, and His461.

Belongs to the BPG-independent phosphoglycerate mutase family. In terms of assembly, monomer. It depends on Mn(2+) as a cofactor.

It carries out the reaction (2R)-2-phosphoglycerate = (2R)-3-phosphoglycerate. It participates in carbohydrate degradation; glycolysis; pyruvate from D-glyceraldehyde 3-phosphate: step 3/5. Its function is as follows. Catalyzes the interconversion of 2-phosphoglycerate and 3-phosphoglycerate. The sequence is that of 2,3-bisphosphoglycerate-independent phosphoglycerate mutase from Akkermansia muciniphila (strain ATCC BAA-835 / DSM 22959 / JCM 33894 / BCRC 81048 / CCUG 64013 / CIP 107961 / Muc).